Here is a 91-residue protein sequence, read N- to C-terminus: Metalloproteinase inhibitor 2 (91 aa).

The region spanning 1–91 (KAVSEKEVDS…FIVPWDTLST (91 aa)) is the NTR domain.

Belongs to the protease inhibitor I35 (TIMP) family. In terms of processing, the activity of TIMP2 is dependent on the presence of disulfide bonds.

Its subcellular location is the secreted. In terms of biological role, complexes with metalloproteinases (such as collagenases) and irreversibly inactivates them. In Equus caballus (Horse), this protein is Metalloproteinase inhibitor 2 (TIMP2).